The sequence spans 292 residues: Bis(5'-nucleosyl)-tetraphosphatase, symmetrical (292 aa).

The protein belongs to the Ap4A hydrolase family.

It catalyses the reaction P(1),P(4)-bis(5'-adenosyl) tetraphosphate + H2O = 2 ADP + 2 H(+). Hydrolyzes diadenosine 5',5'''-P1,P4-tetraphosphate to yield ADP. The polypeptide is Bis(5'-nucleosyl)-tetraphosphatase, symmetrical (Yersinia enterocolitica serotype O:8 / biotype 1B (strain NCTC 13174 / 8081)).